A 930-amino-acid polypeptide reads, in one-letter code: Isoleucine--tRNA ligase (930 aa).

The 'HIGH' region signature appears at 57–67; it reads PYANGHIHLGT. Glu559 lines the L-isoleucyl-5'-AMP pocket. Residues 600-604 carry the 'KMSKS' region motif; that stretch reads KMSKS. Residue Lys603 coordinates ATP. The Zn(2+) site is built by Cys899, Cys902, Cys918, and Cys921.

The protein belongs to the class-I aminoacyl-tRNA synthetase family. IleS type 1 subfamily. In terms of assembly, monomer. Requires Zn(2+) as cofactor.

It is found in the cytoplasm. The enzyme catalyses tRNA(Ile) + L-isoleucine + ATP = L-isoleucyl-tRNA(Ile) + AMP + diphosphate. Functionally, catalyzes the attachment of isoleucine to tRNA(Ile). As IleRS can inadvertently accommodate and process structurally similar amino acids such as valine, to avoid such errors it has two additional distinct tRNA(Ile)-dependent editing activities. One activity is designated as 'pretransfer' editing and involves the hydrolysis of activated Val-AMP. The other activity is designated 'posttransfer' editing and involves deacylation of mischarged Val-tRNA(Ile). The sequence is that of Isoleucine--tRNA ligase from Desulforudis audaxviator (strain MP104C).